A 118-amino-acid polypeptide reads, in one-letter code: Large ribosomal subunit protein bL19 (118 aa).

This sequence belongs to the bacterial ribosomal protein bL19 family.

In terms of biological role, this protein is located at the 30S-50S ribosomal subunit interface and may play a role in the structure and function of the aminoacyl-tRNA binding site. The chain is Large ribosomal subunit protein bL19 (rplS) from Serratia marcescens.